We begin with the raw amino-acid sequence, 274 residues long: Copper chaperone for superoxide dismutase (274 aa).

Residues 11–74 (ACMLEFAVQM…LLEDTGRQAV (64 aa)) form the HMA domain. Cu cation is bound by residues cysteine 22 and cysteine 25. A Glycyl lysine isopeptide (Lys-Gly) (interchain with G-Cter in ubiquitin) cross-link involves residue lysine 76. The interval 88–234 (AAVAILGGSG…LACGIIARSA (147 aa)) is superoxide dismutase-like. Cysteine 141 and cysteine 227 are joined by a disulfide. Zn(2+) contacts are provided by histidine 147, histidine 155, histidine 164, and aspartate 167. Residues lysine 189, lysine 216, and lysine 241 each participate in a glycyl lysine isopeptide (Lys-Gly) (interchain with G-Cter in ubiquitin) cross-link. Residues cysteine 244 and cysteine 246 each contribute to the Cu cation site.

This sequence in the C-terminal section; belongs to the Cu-Zn superoxide dismutase family. Homodimer, and heterodimer with SOD1. Interacts with COMMD1. Interacts with XIAP/BIRC4. Interacts with SLC31A1(via C-terminal domain); this interaction is Cu(1+)-mediated. The heterodimer CCS:SOD1 interacts with SLC31A1; this heterotrimer is Cu(1+)-mediated and its maintenance is regulated through SOD1 activation. It depends on Cu(2+) as a cofactor. The cofactor is Zn(2+). In terms of processing, ubiquitinion by XIAP/BIRC4 leads to enhancement of its chaperone activity toward its physiologic target, SOD1, rather than proteasomal degradation. XIAP/BIRC4 preferentially ubiquitinates at Lys-241.

The protein resides in the cytoplasm. Functionally, delivers copper to copper zinc superoxide dismutase (SOD1). The protein is Copper chaperone for superoxide dismutase of Sus scrofa (Pig).